Consider the following 288-residue polypeptide: 4-hydroxy-tetrahydrodipicolinate synthase (288 aa).

Thr-43 is a pyruvate binding site. Tyr-131 (proton donor/acceptor) is an active-site residue. Lys-160 serves as the catalytic Schiff-base intermediate with substrate. Ile-200 contributes to the pyruvate binding site.

This sequence belongs to the DapA family. In terms of assembly, homotetramer; dimer of dimers.

The protein resides in the cytoplasm. The enzyme catalyses L-aspartate 4-semialdehyde + pyruvate = (2S,4S)-4-hydroxy-2,3,4,5-tetrahydrodipicolinate + H2O + H(+). Its pathway is amino-acid biosynthesis; L-lysine biosynthesis via DAP pathway; (S)-tetrahydrodipicolinate from L-aspartate: step 3/4. In terms of biological role, catalyzes the condensation of (S)-aspartate-beta-semialdehyde [(S)-ASA] and pyruvate to 4-hydroxy-tetrahydrodipicolinate (HTPA). In Methanococcus aeolicus (strain ATCC BAA-1280 / DSM 17508 / OCM 812 / Nankai-3), this protein is 4-hydroxy-tetrahydrodipicolinate synthase.